We begin with the raw amino-acid sequence, 319 residues long: Putative replication factor C small subunit R395 (319 aa).

45–52 lines the ATP pocket; that stretch reads GSPGVGKT.

The protein belongs to the activator 1 small subunits family. RfcS subfamily.

Part of the RFC clamp loader complex which loads the PCNA sliding clamp onto DNA. The chain is Putative replication factor C small subunit R395 from Acanthamoeba polyphaga mimivirus (APMV).